Consider the following 365-residue polypeptide: Chorismate synthase (365 aa).

2 residues coordinate NADP(+): Arg48 and Arg54. FMN is bound by residues 125-127 (RSS), 237-238 (NA), Gly277, 292-296 (KPTSS), and Arg318.

This sequence belongs to the chorismate synthase family. Homotetramer. FMNH2 serves as cofactor.

It carries out the reaction 5-O-(1-carboxyvinyl)-3-phosphoshikimate = chorismate + phosphate. It participates in metabolic intermediate biosynthesis; chorismate biosynthesis; chorismate from D-erythrose 4-phosphate and phosphoenolpyruvate: step 7/7. Its function is as follows. Catalyzes the anti-1,4-elimination of the C-3 phosphate and the C-6 proR hydrogen from 5-enolpyruvylshikimate-3-phosphate (EPSP) to yield chorismate, which is the branch point compound that serves as the starting substrate for the three terminal pathways of aromatic amino acid biosynthesis. This reaction introduces a second double bond into the aromatic ring system. The protein is Chorismate synthase of Paracidovorax citrulli (strain AAC00-1) (Acidovorax citrulli).